The chain runs to 345 residues: Achaete-scute complex protein T4 (345 aa).

A compositionally biased stretch (low complexity) spans 78 to 92; sequence SESVSSLSPGSSPAP. The interval 78 to 109 is disordered; the sequence is SESVSSLSPGSSPAPYNVDQSQSVQRRNARER. The bHLH domain maps to 99 to 162; sequence QSVQRRNARE…RIAVEYIRRL (64 aa).

In terms of assembly, efficient DNA binding requires dimerization with another bHLH protein. Interacts with da (via bHLH motif). Interacts with Bap60. As to expression, l(1)SC, SC and AC strongly label the presumptive stomatogastric nervous system, while ASE is more prominent in the presumptive procephalic lobe. Associates with the somatic nuclei through nuclear cycles 9 and 10. During nuclear cycle 11 distributes uniformly in the embryo.

Functionally, AS-C proteins are involved in the determination of the neuronal precursors in the peripheral nervous system and the central nervous system. Also involved in sex determination and dosage compensation. The polypeptide is Achaete-scute complex protein T4 (sc) (Drosophila melanogaster (Fruit fly)).